The sequence spans 227 residues: Probable methylthioribulose-1-phosphate dehydratase (227 aa).

C87 lines the substrate pocket. The Zn(2+) site is built by H105 and H107. E129 functions as the Proton donor/acceptor in the catalytic mechanism. Position 185 (H185) interacts with Zn(2+).

The protein belongs to the aldolase class II family. MtnB subfamily. Zn(2+) serves as cofactor.

Its subcellular location is the cytoplasm. It carries out the reaction 5-(methylsulfanyl)-D-ribulose 1-phosphate = 5-methylsulfanyl-2,3-dioxopentyl phosphate + H2O. It participates in amino-acid biosynthesis; L-methionine biosynthesis via salvage pathway; L-methionine from S-methyl-5-thio-alpha-D-ribose 1-phosphate: step 2/6. Functionally, catalyzes the dehydration of methylthioribulose-1-phosphate (MTRu-1-P) into 2,3-diketo-5-methylthiopentyl-1-phosphate (DK-MTP-1-P). This Drosophila ananassae (Fruit fly) protein is Probable methylthioribulose-1-phosphate dehydratase.